Reading from the N-terminus, the 20-residue chain is Zinc metalloproteinase-disintegrin-like uracoina-1 (20 aa).

It belongs to the venom metalloproteinase (M12B) family. P-III subfamily. Monomer. Zn(2+) is required as a cofactor. As to expression, expressed by the venom gland.

Its subcellular location is the secreted. Its activity is regulated as follows. Inhibited by ethylenediaminetetraacetic acid (EDTA) and 1,10-phenanthroline. Not inhibited by tosyl-L-lysine chloromethyl ketone (TCLK) and phenylmethanesulfonylfluoride (PMSF). Its function is as follows. Snake venom zinc metalloprotease that possesses hemorrhagic activity (minimum hemorrhagic dose, MHD=4.7 ug) when injected intradermally into mice. Degrades the alpha-chain of fibrinogen (FGA). This is Zinc metalloproteinase-disintegrin-like uracoina-1 from Crotalus vegrandis (Uracoan rattlesnake).